The chain runs to 822 residues: IQ and AAA domain-containing protein 1-like (822 aa).

The region spanning 206–235 is the IQ domain; the sequence is QDQGAIVIQKVWKGYLQRKRIEQDRRMEME. Basic and acidic residues predominate over residues 338–363; it reads RQELEAQAQENKKKEQEKNKDKVKEK. Disordered regions lie at residues 338 to 378 and 457 to 484; these read RQEL…KAKK and REET…KDLT. A compositionally biased stretch (basic residues) spans 464 to 479; it reads KSPKKKGGKKSGKKKK. An ATP-binding site is contributed by 569–576; the sequence is GPSGMGKK.

It belongs to the AAA ATPase family.

The protein is IQ and AAA domain-containing protein 1-like (Iqca1l) of Rattus norvegicus (Rat).